We begin with the raw amino-acid sequence, 266 residues long: Undecaprenyl-diphosphatase (266 aa).

8 consecutive transmembrane segments (helical) span residues 4–24, 39–59, 86–106, 112–132, 145–165, 182–202, 210–230, and 246–266; these read ILSAIILGIIQGITEFLPISS, LSIIFDIYLHLATVLVIIIYY, LKLILLILIITIVTGVVGTFI, MFTLSFVLINFIITGILILML, ILLAGIFMGLMQGLGALPGIS, KSAFEISFLSLIPIVFGAILL, IFMVLNFFEINLGALVAFVVG, and LYYFSIYLFALSIIVCYFVRI.

It belongs to the UppP family.

Its subcellular location is the cell inner membrane. The enzyme catalyses di-trans,octa-cis-undecaprenyl diphosphate + H2O = di-trans,octa-cis-undecaprenyl phosphate + phosphate + H(+). Functionally, catalyzes the dephosphorylation of undecaprenyl diphosphate (UPP). Confers resistance to bacitracin. This is Undecaprenyl-diphosphatase from Borreliella burgdorferi (strain ATCC 35210 / DSM 4680 / CIP 102532 / B31) (Borrelia burgdorferi).